We begin with the raw amino-acid sequence, 181 residues long: Oligoribonuclease (181 aa).

Positions 8–171 (LIWVDLEMTG…DDIRESIAEL (164 aa)) constitute an Exonuclease domain. Residue Tyr-129 is part of the active site.

The protein belongs to the oligoribonuclease family.

The protein localises to the cytoplasm. Functionally, 3'-to-5' exoribonuclease specific for small oligoribonucleotides. The protein is Oligoribonuclease of Vibrio campbellii (strain ATCC BAA-1116).